A 676-amino-acid chain; its full sequence is DNA ligase (676 aa).

NAD(+) contacts are provided by residues 34 to 38, 84 to 85, and E116; these read DAEYD and SL. K118 acts as the N6-AMP-lysine intermediate in catalysis. The NAD(+) site is built by R139, E174, K294, and K318. Zn(2+) is bound by residues C412, C415, C428, and C433. One can recognise a BRCT domain in the interval 589-676; sequence KGGEALKGLT…RTGKKAEELV (88 aa).

The protein belongs to the NAD-dependent DNA ligase family. LigA subfamily. Mg(2+) is required as a cofactor. Requires Mn(2+) as cofactor.

It catalyses the reaction NAD(+) + (deoxyribonucleotide)n-3'-hydroxyl + 5'-phospho-(deoxyribonucleotide)m = (deoxyribonucleotide)n+m + AMP + beta-nicotinamide D-nucleotide.. Functionally, DNA ligase that catalyzes the formation of phosphodiester linkages between 5'-phosphoryl and 3'-hydroxyl groups in double-stranded DNA using NAD as a coenzyme and as the energy source for the reaction. It is essential for DNA replication and repair of damaged DNA. In Thermus thermophilus (strain ATCC 27634 / DSM 579 / HB8), this protein is DNA ligase.